The sequence spans 296 residues: Light-independent protochlorophyllide reductase iron-sulfur ATP-binding protein (296 aa).

The tract at residues 1 to 20 is disordered; it reads MTTTLSRPTDGEGSVQVQQD. ATP-binding positions include 39–44 and Lys-68; that span reads GIGKST. Ser-43 lines the Mg(2+) pocket. Cys-124 and Cys-158 together coordinate [4Fe-4S] cluster. 209-210 contributes to the ATP binding site; it reads NR.

The protein belongs to the NifH/BchL/ChlL family. As to quaternary structure, homodimer. Protochlorophyllide reductase is composed of three subunits; ChlL, ChlN and ChlB. Requires [4Fe-4S] cluster as cofactor.

The catalysed reaction is chlorophyllide a + oxidized 2[4Fe-4S]-[ferredoxin] + 2 ADP + 2 phosphate = protochlorophyllide a + reduced 2[4Fe-4S]-[ferredoxin] + 2 ATP + 2 H2O. Its pathway is porphyrin-containing compound metabolism; chlorophyll biosynthesis (light-independent). Component of the dark-operative protochlorophyllide reductase (DPOR) that uses Mg-ATP and reduced ferredoxin to reduce ring D of protochlorophyllide (Pchlide) to form chlorophyllide a (Chlide). This reaction is light-independent. The L component serves as a unique electron donor to the NB-component of the complex, and binds Mg-ATP. This is Light-independent protochlorophyllide reductase iron-sulfur ATP-binding protein from Synechococcus sp. (strain CC9902).